A 572-amino-acid polypeptide reads, in one-letter code: BOS complex subunit ncln (572 aa).

The N-terminal stretch at 1-35 (MFEEAGEVLENMLKVSFPLSLVLFLVLVCPLRAEA) is a signal peptide. The Extracellular segment spans residues 36–530 (AHEFSVYRMQ…TMNAYRVKPA (495 aa)). Residues N108, N234, and N436 are each glycosylated (N-linked (GlcNAc...) asparagine). A helical transmembrane segment spans residues 531–551 (IFDLLLAVCIASYLGVLYLAI). At 552–572 (QNFGLLYGFLRRVTAPRVKQH) the chain is on the cytoplasmic side.

Belongs to the nicastrin family. As to quaternary structure, component of the multi-pass translocon (MPT) complex.

Its subcellular location is the endoplasmic reticulum membrane. Functionally, component of the multi-pass translocon (MPT) complex that mediates insertion of multi-pass membrane proteins into the lipid bilayer of membranes. The MPT complex takes over after the SEC61 complex: following membrane insertion of the first few transmembrane segments of proteins by the SEC61 complex, the MPT complex occludes the lateral gate of the SEC61 complex to promote insertion of subsequent transmembrane regions. Antagonizes Nodal signaling and subsequent organization of axial structures during mesodermal patterning. Ectopic expression results in cyclopia, due to a defect in mesendoderm patterning. The chain is BOS complex subunit ncln (ncln) from Danio rerio (Zebrafish).